We begin with the raw amino-acid sequence, 232 residues long: Zinc finger protein RTS2 (232 aa).

The segment at 24-48 (YYCQICQRQCKDANGFQSHNKSPSH) adopts a C2H2-type zinc-finger fold. 2 disordered regions span residues 180–199 (AKRQTEKVYQPEMKSEISGD) and 211–232 (GNGRVNKKKKKVPPRKDGIKFR).

The protein localises to the nucleus. The chain is Zinc finger protein RTS2 (RTS2) from Saccharomyces cerevisiae (strain ATCC 204508 / S288c) (Baker's yeast).